The following is a 542-amino-acid chain: Pre-mRNA-splicing factor 38B (542 aa).

Over residues 1–12 the composition is skewed to polar residues; it reads MANNSPALTGNS. Positions 1–24 are disordered; the sequence is MANNSPALTGNSQPQHQAAAAVVQ. A2 carries the N-acetylalanine modification. S5 carries the phosphoserine modification. Over residues 13–24 the composition is skewed to low complexity; sequence QPQHQAAAAVVQ. K227 is subject to N6-acetyllysine. Residues 232-542 form a disordered region; it reads QIKTRPRKIK…KEHKNKDETV (311 aa). Over residues 243–255 the composition is skewed to basic and acidic residues; the sequence is DGKEGVEEIDRHI. Residues 256 to 284 are compositionally biased toward basic residues; the sequence is ERRRSRSPRRSLSPRRSPRRSRSRSHHRD. Phosphoserine occurs at positions 288, 290, 318, and 320. Residues 291–327 are compositionally biased toward basic and acidic residues; sequence FDRELEREKERQRLEREAKEREKERRRSRSLDRGLDR. The stretch at 292-323 forms a coiled coil; sequence DRELEREKERQRLEREAKEREKERRRSRSLDR. Positions 328–344 are enriched in basic residues; it reads RRSRSRERHRSRSRSRD. The span at 345–418 shows a compositional bias: basic and acidic residues; that stretch reads RKGDRRDRDR…DRRHRDDKKE (74 aa). Positions 419–448 are enriched in basic residues; it reads SKKKHSRSRSRERKHRSRSRSRNAGKRSRS. At S446 the chain carries Phosphoserine. Residues 449-466 are compositionally biased toward basic and acidic residues; the sequence is RSKDKASKHKNESKEKSN. 3 positions are modified to phosphoserine: S471, S473, and S479. Composition is skewed to basic and acidic residues over residues 479–492 and 499–522; these read SVEKRKREHSPSRE and RSQDRSHKRDHDSKDQSDRQDHQR. S523, S525, and S530 each carry phosphoserine. A compositionally biased stretch (basic and acidic residues) spans 530-542; that stretch reads SQEKEHKNKDETV.

This sequence belongs to the PRP38 family.

It localises to the nucleus. May be required for pre-mRNA splicing. The polypeptide is Pre-mRNA-splicing factor 38B (Prpf38b) (Rattus norvegicus (Rat)).